The primary structure comprises 269 residues: HTH-type transcriptional activator ArnR (269 aa).

At 1–218 (MTKSLFDVLK…LLRLTNSYTL (218 aa)) the chain is on the cytoplasmic side. Positions 39–62 (TTEISQTINTSRKSIIDAIRKLVD) form a DNA-binding region, H-T-H motif. The chain crosses the membrane as a helical span at residues 219–239 (EMANVKVMGFILISLPLLMYF). Residues 240-242 (RDQ) are Extracellular-facing. The chain crosses the membrane as a helical span at residues 243–263 (LGLIELPWLYAVIFLALLSVF). The Cytoplasmic segment spans residues 264-269 (AQILSR).

Its subcellular location is the cell membrane. Functionally, involved in regulation of archaellar gene expression. Activates flaB transcription upon nutrient starvation by acting on the flaB promoter. In Sulfolobus acidocaldarius (strain ATCC 33909 / DSM 639 / JCM 8929 / NBRC 15157 / NCIMB 11770), this protein is HTH-type transcriptional activator ArnR.